The following is a 719-amino-acid chain: Fatty acid oxidation complex subunit alpha (719 aa).

An enoyl-CoA hydratase/isomerase region spans residues 1–190; sequence MIYQGNRITV…KLGLVDAVVA (190 aa). Asp298 is a binding site for substrate. Positions 313–719 are 3-hydroxyacyl-CoA dehydrogenase; sequence HDINEAAVLG…AAGETFYPKA (407 aa). Residues Met326, Asp345, 402-404, Lys409, and Ser431 each bind NAD(+); that span reads VVE. His452 acts as the For 3-hydroxyacyl-CoA dehydrogenase activity in catalysis. Asn455 lines the NAD(+) pocket. Substrate is bound at residue Asn502.

It in the N-terminal section; belongs to the enoyl-CoA hydratase/isomerase family. This sequence in the C-terminal section; belongs to the 3-hydroxyacyl-CoA dehydrogenase family. As to quaternary structure, heterotetramer of two alpha chains (FadB) and two beta chains (FadA).

The enzyme catalyses a (3S)-3-hydroxyacyl-CoA + NAD(+) = a 3-oxoacyl-CoA + NADH + H(+). It carries out the reaction a (3S)-3-hydroxyacyl-CoA = a (2E)-enoyl-CoA + H2O. The catalysed reaction is a 4-saturated-(3S)-3-hydroxyacyl-CoA = a (3E)-enoyl-CoA + H2O. It catalyses the reaction (3S)-3-hydroxybutanoyl-CoA = (3R)-3-hydroxybutanoyl-CoA. The enzyme catalyses a (3Z)-enoyl-CoA = a 4-saturated (2E)-enoyl-CoA. It carries out the reaction a (3E)-enoyl-CoA = a 4-saturated (2E)-enoyl-CoA. It functions in the pathway lipid metabolism; fatty acid beta-oxidation. Functionally, involved in the aerobic and anaerobic degradation of long-chain fatty acids via beta-oxidation cycle. Catalyzes the formation of 3-oxoacyl-CoA from enoyl-CoA via L-3-hydroxyacyl-CoA. It can also use D-3-hydroxyacyl-CoA and cis-3-enoyl-CoA as substrate. This Psychrobacter sp. (strain PRwf-1) protein is Fatty acid oxidation complex subunit alpha.